We begin with the raw amino-acid sequence, 506 residues long: Dolabradiene monooxygenase (506 aa).

A helical transmembrane segment spans residues 5–25; it reads VLLAVAMVALIAVLSKLKSLL. Cysteine 443 is a heme binding site.

It belongs to the cytochrome P450 family. The cofactor is heme.

The protein localises to the membrane. It carries out the reaction dolabradiene + reduced [NADPH--hemoprotein reductase] + O2 = 15,16-epoxydolabrene + oxidized [NADPH--hemoprotein reductase] + H2O + H(+). The enzyme catalyses 15,16-epoxydolabrene + reduced [NADPH--hemoprotein reductase] + O2 = 3beta-hydroxy-15,16-epoxydolabrene + oxidized [NADPH--hemoprotein reductase] + H2O + H(+). In terms of biological role, involved in the production of antifungal dolabralexin phytoalexins in response to biotic and abiotic stresses. Catalyzes the epoxidation of dolabradiene at C-16, followed by hydroxylation at C-3, to yield the epoxides 15,16-epoxydolabrene (epoxydolabrene) and 3b-hydroxy-15,16-epoxydolabrene (epoxydolabranol). The polypeptide is Dolabradiene monooxygenase (Zea mays (Maize)).